A 473-amino-acid chain; its full sequence is Cardiolipin synthase C (473 aa).

PLD phosphodiesterase domains lie at L125–Y152 and S364–S391. Residues H130, K132, D137, H369, K371, and D376 contribute to the active site.

It belongs to the phospholipase D family. Cardiolipin synthase subfamily. ClsC sub-subfamily.

The catalysed reaction is a 1,2-diacyl-sn-glycero-3-phospho-(1'-sn-glycerol) + a 1,2-diacyl-sn-glycero-3-phosphoethanolamine = a cardiolipin + ethanolamine. With respect to regulation, full activity requires coexpression with the neighboring gene ymdB. In terms of biological role, catalyzes the synthesis of cardiolipin (CL) (diphosphatidylglycerol) from phosphatidylglycerol (PG) and phosphatidylethanolamine (PE). This is Cardiolipin synthase C from Escherichia coli (strain K12).